Reading from the N-terminus, the 286-residue chain is Release factor glutamine methyltransferase (286 aa).

Residues 120–124 (GTGSG), D143, W172, and N187 each bind S-adenosyl-L-methionine. 187–190 (NPPY) lines the substrate pocket.

Belongs to the protein N5-glutamine methyltransferase family. PrmC subfamily.

It catalyses the reaction L-glutaminyl-[peptide chain release factor] + S-adenosyl-L-methionine = N(5)-methyl-L-glutaminyl-[peptide chain release factor] + S-adenosyl-L-homocysteine + H(+). Its function is as follows. Methylates the class 1 translation termination release factors RF1/PrfA and RF2/PrfB on the glutamine residue of the universally conserved GGQ motif. This is Release factor glutamine methyltransferase from Gloeobacter violaceus (strain ATCC 29082 / PCC 7421).